The sequence spans 87 residues: Colicin-E7 immunity protein (87 aa).

The protein belongs to the colicins ColE2/ColE8/ColE9 and pyocins S1/S2 family.

Functionally, this protein is able to protect a cell, which harbors the plasmid ColE7 encoding colicin E7, against colicin E7, it binds specifically to the DNase-type colicin and inhibits its bactericidal activity. Dimeric ImmE7 may possess a RNase activity that cleaves its own mRNA at a specific site and thus autoregulates translational expression of the downstream ceiE7 gene as well as degradation of the upstream ceaE7 mRNA. In Escherichia coli, this protein is Colicin-E7 immunity protein (imm).